Consider the following 260-residue polypeptide: Glutamate racemase (260 aa).

Substrate contacts are provided by residues 14-15 and 46-47; these read DS and YG. The active-site Proton donor/acceptor is the cysteine 77. 78–79 is a substrate binding site; the sequence is NT. Cysteine 188 functions as the Proton donor/acceptor in the catalytic mechanism. 189–190 is a substrate binding site; that stretch reads TH.

Belongs to the aspartate/glutamate racemases family.

The enzyme catalyses L-glutamate = D-glutamate. Its pathway is cell wall biogenesis; peptidoglycan biosynthesis. In terms of biological role, provides the (R)-glutamate required for cell wall biosynthesis. This is Glutamate racemase from Clostridium perfringens (strain ATCC 13124 / DSM 756 / JCM 1290 / NCIMB 6125 / NCTC 8237 / Type A).